A 332-amino-acid polypeptide reads, in one-letter code: L-lactate dehydrogenase A chain (332 aa).

NAD(+)-binding positions include 29-57 and arginine 99; that span reads GMVG…MEDK. Positions 106, 138, and 169 each coordinate substrate. Asparagine 138 provides a ligand contact to NAD(+). Histidine 193 acts as the Proton acceptor in catalysis. Threonine 248 contacts substrate.

Belongs to the LDH/MDH superfamily. LDH family. As to quaternary structure, homotetramer.

It is found in the cytoplasm. It catalyses the reaction (S)-lactate + NAD(+) = pyruvate + NADH + H(+). It functions in the pathway fermentation; pyruvate fermentation to lactate; (S)-lactate from pyruvate: step 1/1. Functionally, interconverts simultaneously and stereospecifically pyruvate and lactate with concomitant interconversion of NADH and NAD(+). In Fundulus heteroclitus (Killifish), this protein is L-lactate dehydrogenase A chain (ldha).